Here is a 552-residue protein sequence, read N- to C-terminus: Hydroxylamine reductase (552 aa).

Cys5, Cys8, Cys20, and Cys27 together coordinate [2Fe-2S] cluster. Positions 251, 275, 319, 407, 435, 460, 494, and 496 each coordinate hybrid [4Fe-2O-2S] cluster. Cys407 is subject to Cysteine persulfide.

It belongs to the HCP family. The cofactor is [2Fe-2S] cluster. Hybrid [4Fe-2O-2S] cluster serves as cofactor.

Its subcellular location is the cytoplasm. It catalyses the reaction A + NH4(+) + H2O = hydroxylamine + AH2 + H(+). Its function is as follows. Catalyzes the reduction of hydroxylamine to form NH(3) and H(2)O. The sequence is that of Hydroxylamine reductase from Shigella sonnei (strain Ss046).